A 62-amino-acid polypeptide reads, in one-letter code: uncharacterized protein (62 aa).

The helical transmembrane segment at 17–37 (IVFFLGLVVVLLMMINLYMLI) threads the bilayer.

It localises to the membrane. This is an uncharacterized protein from Helicobacter pylori (strain J99 / ATCC 700824) (Campylobacter pylori J99).